The sequence spans 330 residues: Phenylalanine--tRNA ligase alpha subunit (330 aa).

E257 contacts Mg(2+).

It belongs to the class-II aminoacyl-tRNA synthetase family. Phe-tRNA synthetase alpha subunit type 1 subfamily. As to quaternary structure, tetramer of two alpha and two beta subunits. The cofactor is Mg(2+).

It localises to the cytoplasm. The catalysed reaction is tRNA(Phe) + L-phenylalanine + ATP = L-phenylalanyl-tRNA(Phe) + AMP + diphosphate + H(+). This is Phenylalanine--tRNA ligase alpha subunit from Nostoc sp. (strain PCC 7120 / SAG 25.82 / UTEX 2576).